A 439-amino-acid chain; its full sequence is tRNA modification GTPase MnmE (439 aa).

Residues R24, E81, and K121 each coordinate (6S)-5-formyl-5,6,7,8-tetrahydrofolate. Positions 218–363 constitute a TrmE-type G domain; that stretch reads GFKVVIAGAP…LRRLIGDIVE (146 aa). N228 provides a ligand contact to K(+). Residues 228–233, 247–253, and 272–275 each bind GTP; these read NAGKSS, TEIAGTT, and DTAG. S232 serves as a coordination point for Mg(2+). Residues T247, I249, and T252 each coordinate K(+). A Mg(2+)-binding site is contributed by T253. K439 lines the (6S)-5-formyl-5,6,7,8-tetrahydrofolate pocket.

This sequence belongs to the TRAFAC class TrmE-Era-EngA-EngB-Septin-like GTPase superfamily. TrmE GTPase family. Homodimer. Heterotetramer of two MnmE and two MnmG subunits. Requires K(+) as cofactor.

It is found in the cytoplasm. In terms of biological role, exhibits a very high intrinsic GTPase hydrolysis rate. Involved in the addition of a carboxymethylaminomethyl (cmnm) group at the wobble position (U34) of certain tRNAs, forming tRNA-cmnm(5)s(2)U34. This is tRNA modification GTPase MnmE from Rhizobium johnstonii (strain DSM 114642 / LMG 32736 / 3841) (Rhizobium leguminosarum bv. viciae).